Reading from the N-terminus, the 195-residue chain is Protein GrpE (195 aa).

The protein belongs to the GrpE family. In terms of assembly, homodimer.

The protein resides in the cytoplasm. In terms of biological role, participates actively in the response to hyperosmotic and heat shock by preventing the aggregation of stress-denatured proteins, in association with DnaK and GrpE. It is the nucleotide exchange factor for DnaK and may function as a thermosensor. Unfolded proteins bind initially to DnaJ; upon interaction with the DnaJ-bound protein, DnaK hydrolyzes its bound ATP, resulting in the formation of a stable complex. GrpE releases ADP from DnaK; ATP binding to DnaK triggers the release of the substrate protein, thus completing the reaction cycle. Several rounds of ATP-dependent interactions between DnaJ, DnaK and GrpE are required for fully efficient folding. The chain is Protein GrpE from Francisella tularensis subsp. novicida (strain U112).